A 94-amino-acid chain; its full sequence is Large ribosomal subunit protein uL23 (94 aa).

The protein belongs to the universal ribosomal protein uL23 family. Part of the 50S ribosomal subunit. Contacts protein L29, and trigger factor when it is bound to the ribosome.

Its function is as follows. One of the early assembly proteins it binds 23S rRNA. One of the proteins that surrounds the polypeptide exit tunnel on the outside of the ribosome. Forms the main docking site for trigger factor binding to the ribosome. This is Large ribosomal subunit protein uL23 from Geobacter metallireducens (strain ATCC 53774 / DSM 7210 / GS-15).